A 1631-amino-acid polypeptide reads, in one-letter code: ABC transporter A family member 6 (1631 aa).

The next 7 membrane-spanning stretches (helical) occupy residues 25–45, 242–262, 285–305, 317–337, 346–366, 372–392, and 416–436; these read ICCE…ILAL, SVFI…DVVI, SWII…VVIF, GIVI…SFIF, FCGL…IFVS, VSVK…SIYI, and ILML…FEKV. The ABC transporter 1 domain occupies 491–724; sequence ISIRNLRKEF…FGQGYLLTCN (234 aa). 527–534 serves as a coordination point for ATP; sequence GPNGCGKS. The next 7 membrane-spanning stretches (helical) occupy residues 866-886, 1047-1067, 1099-1119, 1127-1147, 1158-1178, 1198-1218, and 1242-1262; these read SFFL…ILYK, AIIY…GSFA, WDFF…AGVI, FGSF…LGYL, AVGA…IASL, IIDL…IVFI, and LGTP…WILL. The ABC transporter 2 domain occupies 1309-1544; sequence IQFKNLHKLF…FGAGYSIDVK (236 aa). 1347-1354 provides a ligand contact to ATP; that stretch reads GLNGGGKS.

It belongs to the ABC transporter superfamily. ABCA family.

The protein localises to the membrane. This chain is ABC transporter A family member 6 (abcA6), found in Dictyostelium discoideum (Social amoeba).